Consider the following 373-residue polypeptide: Gibberellin 3-beta-dioxygenase 2 (373 aa).

The 102-residue stretch at 203–304 folds into the Fe2OG dioxygenase domain; that stretch reads MTATVHLNWY…RVSLGYFLGP (102 aa). Tyr212 is a binding site for 2-oxoglutarate. Fe cation-binding residues include His227, Asp229, and His285. Arg295 and Ser297 together coordinate 2-oxoglutarate.

It belongs to the iron/ascorbate-dependent oxidoreductase family. Requires L-ascorbate as cofactor. The cofactor is Fe(2+). Highly expressed in elongating leaves. Expressed in unopened flowers. Expressed at low levels in leaf blades, shoots, rachis, stems and young panicles.

It carries out the reaction gibberellin A20 + 2-oxoglutarate + O2 = gibberellin A1 + succinate + CO2. It participates in plant hormone biosynthesis; gibberellin biosynthesis. Its function is as follows. Catalyzes the 3-beta-hydroxylation of the inactive gibberellin precursors, leading to the formation of bioactive gibberellins. In vitro, converts the precursors GA20, GA5, GA44 and GA9 to the corresponding 3-beta-hydroxylated active products GA1, GA3, GA38 and GA4, respectively. Involved in the production of bioactive GA for vegetative growth and development. Controls the elongation of the vegetative shoot and plant height by the regulation of active gibberellin levels. The chain is Gibberellin 3-beta-dioxygenase 2 from Oryza sativa subsp. japonica (Rice).